The sequence spans 402 residues: Phosphoglycerate kinase (402 aa).

Residues 24 to 26 (DFN), arginine 41, 64 to 67 (HMGR), arginine 123, and arginine 156 contribute to the substrate site. ATP is bound by residues lysine 207, glycine 298, glutamate 329, and 358–361 (GGDS).

The protein belongs to the phosphoglycerate kinase family. As to quaternary structure, monomer.

It localises to the cytoplasm. It carries out the reaction (2R)-3-phosphoglycerate + ATP = (2R)-3-phospho-glyceroyl phosphate + ADP. The protein operates within carbohydrate degradation; glycolysis; pyruvate from D-glyceraldehyde 3-phosphate: step 2/5. This Microcystis aeruginosa (strain NIES-843 / IAM M-2473) protein is Phosphoglycerate kinase.